The sequence spans 224 residues: C-reactive protein (224 aa).

An N-terminal signal peptide occupies residues Met1 to Gly18. Gln19 carries the pyrrolidone carboxylic acid modification. The Pentraxin (PTX) domain maps to Ser23–Pro224. A disulfide bond links Cys54 and Cys115. Ca(2+)-binding residues include Asp78, Asn79, Glu156, Gln157, Asp158, and Gln168.

It belongs to the pentraxin family. In terms of assembly, homopentamer. Pentraxin (or pentaxin) have a discoid arrangement of 5 non-covalently bound subunits. Interacts with FCN1; may regulate monocyte activation by FCN1. It depends on Ca(2+) as a cofactor. As to expression, found in plasma.

It localises to the secreted. Its function is as follows. Displays several functions associated with host defense: it promotes agglutination, bacterial capsular swelling, phagocytosis and complement fixation through its calcium-dependent binding to phosphorylcholine. Can interact with DNA and histones and may scavenge nuclear material released from damaged circulating cells. This Homo sapiens (Human) protein is C-reactive protein (CRP).